The following is a 150-amino-acid chain: Ribosomal RNA large subunit methyltransferase H (150 aa).

Residues Ala100 and 118–123 (LSEMTF) each bind S-adenosyl-L-methionine.

This sequence belongs to the RNA methyltransferase RlmH family. In terms of assembly, homodimer.

The protein resides in the cytoplasm. The enzyme catalyses pseudouridine(1915) in 23S rRNA + S-adenosyl-L-methionine = N(3)-methylpseudouridine(1915) in 23S rRNA + S-adenosyl-L-homocysteine + H(+). Specifically methylates the pseudouridine at position 1915 (m3Psi1915) in 23S rRNA. The chain is Ribosomal RNA large subunit methyltransferase H from Helicobacter pylori (strain P12).